The primary structure comprises 689 residues: tRNA 5-methylaminomethyl-2-thiouridine biosynthesis bifunctional protein MnmC (689 aa).

The interval 1–245 (MNQRPIQTAT…KREMLTGTLP (245 aa)) is tRNA (mnm(5)s(2)U34)-methyltransferase. The interval 270–689 (IGGGIVSALT…RSPATQESSR (420 aa)) is FAD-dependent cmnm(5)s(2)U34 oxidoreductase.

This sequence in the N-terminal section; belongs to the methyltransferase superfamily. tRNA (mnm(5)s(2)U34)-methyltransferase family. The protein in the C-terminal section; belongs to the DAO family. The cofactor is FAD.

Its subcellular location is the cytoplasm. It carries out the reaction 5-aminomethyl-2-thiouridine(34) in tRNA + S-adenosyl-L-methionine = 5-methylaminomethyl-2-thiouridine(34) in tRNA + S-adenosyl-L-homocysteine + H(+). In terms of biological role, catalyzes the last two steps in the biosynthesis of 5-methylaminomethyl-2-thiouridine (mnm(5)s(2)U) at the wobble position (U34) in tRNA. Catalyzes the FAD-dependent demodification of cmnm(5)s(2)U34 to nm(5)s(2)U34, followed by the transfer of a methyl group from S-adenosyl-L-methionine to nm(5)s(2)U34, to form mnm(5)s(2)U34. The protein is tRNA 5-methylaminomethyl-2-thiouridine biosynthesis bifunctional protein MnmC of Yersinia pseudotuberculosis serotype I (strain IP32953).